Here is a 172-residue protein sequence, read N- to C-terminus: NADH-quinone oxidoreductase subunit B (172 aa).

The [4Fe-4S] cluster site is built by cysteine 46, cysteine 47, cysteine 111, and cysteine 141.

The protein belongs to the complex I 20 kDa subunit family. NDH-1 is composed of 14 different subunits. Subunits NuoB, C, D, E, F, and G constitute the peripheral sector of the complex. [4Fe-4S] cluster is required as a cofactor.

It localises to the cell membrane. It carries out the reaction a quinone + NADH + 5 H(+)(in) = a quinol + NAD(+) + 4 H(+)(out). Functionally, NDH-1 shuttles electrons from NADH, via FMN and iron-sulfur (Fe-S) centers, to quinones in the respiratory chain. The immediate electron acceptor for the enzyme in this species is believed to be a menaquinone. Couples the redox reaction to proton translocation (for every two electrons transferred, four hydrogen ions are translocated across the cytoplasmic membrane), and thus conserves the redox energy in a proton gradient. This Brevibacillus brevis (strain 47 / JCM 6285 / NBRC 100599) protein is NADH-quinone oxidoreductase subunit B.